Consider the following 302-residue polypeptide: Protoheme IX farnesyltransferase (302 aa).

A run of 9 helical transmembrane segments spans residues 27 to 47 (VVAL…PGMV), 53 to 73 (LFGL…NHVI), 100 to 120 (LVFA…AVNV), 121 to 141 (LTAV…TVFL), 149 to 169 (IVWG…AVTG), 175 to 195 (PLLL…ALAI), 215 to 235 (VAFT…VSLV), 237 to 257 (FIIH…GIGF), and 273 to 293 (AMPT…LLLV).

The protein belongs to the UbiA prenyltransferase family. Protoheme IX farnesyltransferase subfamily.

Its subcellular location is the cell inner membrane. The enzyme catalyses heme b + (2E,6E)-farnesyl diphosphate + H2O = Fe(II)-heme o + diphosphate. Its pathway is porphyrin-containing compound metabolism; heme O biosynthesis; heme O from protoheme: step 1/1. Converts heme B (protoheme IX) to heme O by substitution of the vinyl group on carbon 2 of heme B porphyrin ring with a hydroxyethyl farnesyl side group. The polypeptide is Protoheme IX farnesyltransferase (Thioalkalivibrio sulfidiphilus (strain HL-EbGR7)).